The chain runs to 302 residues: Glutaminase (302 aa).

Residues S61, N111, E155, N162, Y186, Y238, and V256 each coordinate substrate.

It belongs to the glutaminase family. As to quaternary structure, homotetramer.

The catalysed reaction is L-glutamine + H2O = L-glutamate + NH4(+). The chain is Glutaminase from Pseudomonas savastanoi pv. phaseolicola (strain 1448A / Race 6) (Pseudomonas syringae pv. phaseolicola (strain 1448A / Race 6)).